A 339-amino-acid chain; its full sequence is MEVVSKIDQENQAKIWKQIFGFAESLVLKCAVQLEIAETLHNNVKPMSLSELASKLPAQPVNEDRLYRILHFLVHMKLFNKDATTQKYSLAPPAKYLLKGWEKSMVPSILSVTDKDFTAPWNHLGDGLTGNCNAFEKALGKGIRVYMRENPEKDQLFNEGMACDTRLFASALVNECKSIFSDGINTLAGVGRGTGTAVKAISKAFPDIKCTIHDLPEITSKNSKISRDVFKSVPSADAIFMKSILHEWNDEECIQILKRCKEAIPKGGKVIIADVVIDMDSTHPYSKSRLAMDLAMMLHTGGKERTEEDWKKLIDAAGFASCKITKLSALQSVIEAYPH.

Met161 is a binding site for S-adenosyl-L-methionine. Asp164 provides a ligand contact to substrate. S-adenosyl-L-methionine contacts are provided by residues Thr165, Gly191, Asp214, 228 to 229 (DV), and Lys242. Residue 243 to 247 (SILHE) coordinates substrate. His246 (proton acceptor) is an active-site residue.

This sequence belongs to the class I-like SAM-binding methyltransferase superfamily. Cation-independent O-methyltransferase family. COMT subfamily.

It catalyses the reaction (S)-scoulerine + S-adenosyl-L-methionine = (S)-tetrahydrocolumbamine + S-adenosyl-L-homocysteine + H(+). Its pathway is alkaloid biosynthesis. Methyltransferase involved in the biosynthesis of the benzylisoquinoline alkaloid noscapine. Catalyzes the conversion of (S)-scoulerine to (S)-tetrahydrocolumbamine. The sequence is that of Probable scoulerine-9-O-methyltransferase OMT3B from Papaver somniferum (Opium poppy).